The sequence spans 354 residues: Probable L-ascorbate-6-phosphate lactonase UlaG (354 aa).

The protein belongs to the UlaG family. Requires a divalent metal cation as cofactor.

It localises to the cytoplasm. The enzyme catalyses L-ascorbate 6-phosphate + H2O = 3-dehydro-L-gulonate 6-phosphate. It participates in cofactor degradation; L-ascorbate degradation; D-xylulose 5-phosphate from L-ascorbate: step 1/4. In terms of biological role, probably catalyzes the hydrolysis of L-ascorbate-6-P into 3-keto-L-gulonate-6-P. Is essential for L-ascorbate utilization under anaerobic conditions. The polypeptide is Probable L-ascorbate-6-phosphate lactonase UlaG (Shigella dysenteriae serotype 1 (strain Sd197)).